Here is a 264-residue protein sequence, read N- to C-terminus: Movement protein (264 aa).

Residues 211–264 (RTKSSKRGPKNNNNLGKGRSGGRPKPKSVDEVEEEFDNLIEDEAETSVADSDSY) form a disordered region. Over residues 241-255 (EVEEEFDNLIEDEAE) the composition is skewed to acidic residues.

The protein belongs to the tobamovirus movement protein family. In terms of assembly, binds to host RBCS at the plasmodesmata; this interaction seems required for viral systemic movement. In resistant plants, interacts with host MBP2C at host microtubules; this interaction prevents virus cell to cell movement. In resistant plants, interacts with host resistance (R) protein (e.g. tomato ToMV resistance protein TM-2(2), AC Q71BG9) at the host plasma membrane; this interaction triggers host defense responses leading to programmed cell death.

It localises to the host cytoplasm. Its subcellular location is the host cytoskeleton. It is found in the host cell junction. The protein localises to the host plasmodesma. Its function is as follows. Transports viral genome to neighboring plant cells directly through plasmosdesmata, without any budding. The movement protein allows efficient cell to cell propagation, by bypassing the host cell wall barrier. Forms a ribonucleoprotein complex with viral RNA. Binds microtubules and modulates microtubule stability. Can bind double-stranded DNA. Triggers host hypersensitive defense reaction in incompatible plants harboring resistance (R) proteins. In Antirrhinum majus (Garden snapdragon), this protein is Movement protein (MP).